A 315-amino-acid chain; its full sequence is DNA-directed RNA polymerase subunit alpha (315 aa).

Residues 1–228 (MLEIEKPKIE…EHFKLFMTLT (228 aa)) form an alpha N-terminal domain (alpha-NTD) region. Residues 245-315 (KEKVLEMTIE…LGLSLKLNDE (71 aa)) form an alpha C-terminal domain (alpha-CTD) region.

It belongs to the RNA polymerase alpha chain family. Homodimer. The RNAP catalytic core consists of 2 alpha, 1 beta, 1 beta' and 1 omega subunit. When a sigma factor is associated with the core the holoenzyme is formed, which can initiate transcription.

The catalysed reaction is RNA(n) + a ribonucleoside 5'-triphosphate = RNA(n+1) + diphosphate. DNA-dependent RNA polymerase catalyzes the transcription of DNA into RNA using the four ribonucleoside triphosphates as substrates. In Clostridium acetobutylicum (strain ATCC 824 / DSM 792 / JCM 1419 / IAM 19013 / LMG 5710 / NBRC 13948 / NRRL B-527 / VKM B-1787 / 2291 / W), this protein is DNA-directed RNA polymerase subunit alpha.